The primary structure comprises 1506 residues: DDB1- and CUL4-associated factor 1 (1506 aa).

The interval 141-499 (QPLRTYSTGL…STLEILNLED (359 aa)) is protein kinase-like. Phosphoserine is present on residues serine 202 and serine 254. The tract at residues 241-275 (RLDSSHKTSSRVNSATKPEEGGLKKNKSAKHGDRE) is disordered. One can recognise a Chromo domain in the interval 561–592 (SYTHEQIVEMMEFLIEYGPAQLYWEPAEVFLK). Lysine 700 is modified (N6-acetyllysine). Residue serine 827 is modified to Phosphoserine. Residues 845-877 (PEKELLLLIRNHLISKGLGETATVLTREADLPM) form the LisH domain. Threonine 887 bears the Phosphothreonine mark. A phosphoserine mark is found at serine 894 and serine 897. Disordered regions lie at residues 916 to 946 (ATVGASAPSAPPAHPPPRPPQGSLPLPGPSY) and 977 to 999 (KSDHGAYSQSPAIKKQLDRHLPS). A compositionally biased stretch (pro residues) spans 924–943 (SAPPAHPPPRPPQGSLPLPG). 2 positions are modified to phosphoserine: serine 978 and serine 999. 5 WD repeats span residues 1090–1129 (EDESGFTCCAFSARERFLMLGTCTGQLKLYNVFSGQEEAS), 1132–1173 (CHNS…DMKH), 1175–1212 (FTEDHYVEFSKHSQDRVIGTKGDIAHIYDIQTGNKLLT), 1214–1246 (FNPDLANNYKRNCATFNPTDDLVLNDGVLWDVR), and 1247–1289 (SAQA…LLHT). The interval 1090-1289 (EDESGFTCCA…DLRTFHLLHT (200 aa)) is WD repeat-like region. 2 consecutive short sequence motifs (DWD box) follow at residues 1241 to 1248 (VLWDVRSA) and 1277 to 1284 (EIWDLRTF). The residue at position 1327 (serine 1327) is a Phosphoserine. Positions 1392 to 1506 (RLAEDEDEEE…EDDIILSLNE (115 aa)) are disordered. 2 stretches are compositionally biased toward acidic residues: residues 1395 to 1482 (EDED…EEVE) and 1489 to 1500 (DSSDNSDLEDDI). The tract at residues 1417-1506 (DDDTDDLDEL…EDDIILSLNE (90 aa)) is interaction with NF2.

The protein belongs to the VPRBP/DCAF1 family. Component of the DCX (DDB1-CUL4-X-box) E3 ubiquitin-protein ligase complex, named CUL4A-RBX1-DDB1-DCAF1/VPRBP complex. Interacts with DDB1; the interaction is direct. Also forms a ternary complex with DDA1 and DDB1. Interacts with NF2 (via FERM domain). Component of the EDVP complex, a E3 ligase complex containing DYRK2, EDD/UBR5, DDB1 and DCAF1. Interacts with DYRK2; the interaction is direct. Interacts with RAG1; the interaction is direct. Interacts with LLGL1 and LLGL2. Interacts with histone H3. Interacts with ESR1 and LATS1; probably recruited by LATS1 to promote ESR1 ubiquitination and ubiquitin-mediated proteasomal degradation. Directly interacts with TET1, TET2 and TET3 (via C-terminus). Interacts with CEP78; promoting DCAF1 localization to centrosomes. In terms of tissue distribution, widely expressed. Expressed in oocytes and zygotes (at protein level).

It localises to the cytoplasm. The protein resides in the nucleus. The protein localises to the cytoskeleton. It is found in the microtubule organizing center. Its subcellular location is the centrosome. It catalyses the reaction L-seryl-[protein] + ATP = O-phospho-L-seryl-[protein] + ADP + H(+). The catalysed reaction is L-threonyl-[protein] + ATP = O-phospho-L-threonyl-[protein] + ADP + H(+). Its pathway is protein modification; protein ubiquitination. Acts both as a substrate recognition component of E3 ubiquitin-protein ligase complexes and as an atypical serine/threonine-protein kinase, playing key roles in various processes such as cell cycle, telomerase regulation and histone modification. Probable substrate-specific adapter of a DCX (DDB1-CUL4-X-box) E3 ubiquitin-protein ligase complex, named CUL4A-RBX1-DDB1-DCAF1/VPRBP complex, which mediates ubiquitination and proteasome-dependent degradation of proteins such as NF2. Involved in the turnover of methylated proteins: recognizes and binds methylated proteins via its chromo domain, leading to ubiquitination of target proteins by the RBX1-DDB1-DCAF1/VPRBP complex. The CUL4A-RBX1-DDB1-DCAF1/VPRBP complex is also involved in B-cell development: DCAF1 is recruited by RAG1 to ubiquitinate proteins, leading to limit error-prone repair during V(D)J recombination. Also part of the EDVP complex, an E3 ligase complex that mediates ubiquitination of proteins such as TERT, leading to TERT degradation and telomerase inhibition. The EDVP complex also mediates ubiquitination and degradation of CCP110. Also acts as an atypical serine/threonine-protein kinase that specifically mediates phosphorylation of 'Thr-120' of histone H2A (H2AT120ph) in a nucleosomal context, thereby repressing transcription. H2AT120ph is present in the regulatory region of many tumor suppresor genes, down-regulates their transcription and is present at high level in a number of tumors. Involved in JNK-mediated apoptosis during cell competition process via its interaction with LLGL1 and LLGL2. By acting on TET dioxygenses, essential for oocyte maintenance at the primordial follicle stage, hence essential for female fertility. This chain is DDB1- and CUL4-associated factor 1, found in Mus musculus (Mouse).